The sequence spans 116 residues: Cyclin-dependent protein kinase inhibitor SMR9 (116 aa).

Positions 1–22 are enriched in basic residues; it reads MASKGKKPLRRTTTRRRKRSHF. A disordered region spans residues 1-62; the sequence is MASKGKKPLR…PVSAESGCCT (62 aa). Residues 35–56 show a composition bias toward low complexity; the sequence is VTSTSSTSTSPTSTATPSPVSA.

Probable cyclin-dependent protein kinase (CDK) inhibitor that functions as a repressor of mitosis in the endoreduplication cell cycle. The polypeptide is Cyclin-dependent protein kinase inhibitor SMR9 (Arabidopsis thaliana (Mouse-ear cress)).